Consider the following 154-residue polypeptide: PTS system fructose-specific EIIA component (154 aa).

The 145-residue stretch at Thr8–Val152 folds into the PTS EIIA type-2 domain. The Tele-phosphohistidine intermediate role is filled by His70. His70 bears the Phosphohistidine; by HPr mark.

It is found in the cytoplasm. Its function is as follows. The phosphoenolpyruvate-dependent sugar phosphotransferase system (sugar PTS), a major carbohydrate active transport system, catalyzes the phosphorylation of incoming sugar substrates concomitantly with their translocation across the cell membrane. The enzyme II PtfABC PTS system is involved in fructose transport. The polypeptide is PTS system fructose-specific EIIA component (Haloferax volcanii (strain ATCC 29605 / DSM 3757 / JCM 8879 / NBRC 14742 / NCIMB 2012 / VKM B-1768 / DS2) (Halobacterium volcanii)).